The chain runs to 1217 residues: ATP-dependent helicase/nuclease subunit A (1217 aa).

Positions 10–475 (VIWTDAQWQS…IDLSQNFRSR (466 aa)) constitute a UvrD-like helicase ATP-binding domain. Residue 31–38 (AAAGSGKT) coordinates ATP. One can recognise a UvrD-like helicase C-terminal domain in the interval 476–786 (KEVLSTTNYI…RMMTIHSSKG (311 aa)).

It belongs to the helicase family. AddA subfamily. As to quaternary structure, heterodimer of AddA and AddB/RexB. It depends on Mg(2+) as a cofactor.

The enzyme catalyses Couples ATP hydrolysis with the unwinding of duplex DNA by translocating in the 3'-5' direction.. It carries out the reaction ATP + H2O = ADP + phosphate + H(+). Functionally, the heterodimer acts as both an ATP-dependent DNA helicase and an ATP-dependent, dual-direction single-stranded exonuclease. Recognizes the chi site generating a DNA molecule suitable for the initiation of homologous recombination. The AddA nuclease domain is required for chi fragment generation; this subunit has the helicase and 3' -&gt; 5' nuclease activities. This Staphylococcus aureus (strain MW2) protein is ATP-dependent helicase/nuclease subunit A.